The chain runs to 157 residues: MFDILIYLFENYIHNESRISIDYDSLTNDLSDIGFQRRDIYNALSWLKNLSCYKKNIIPSINPLSNKITIRIYTQEESLKLNVDCRGFILFLEQLEILTLDTREVIIERIMELDINELNLEDLKWIVLIVLFNIPGCESAYHKLENLLFNFKEDIIH.

It belongs to the Smg family.

The sequence is that of Protein Smg from Buchnera aphidicola subsp. Acyrthosiphon pisum (strain Tuc7).